The following is a 312-amino-acid chain: tRNA dimethylallyltransferase (312 aa).

18 to 25 (GPTASGKS) is a binding site for ATP. 20–25 (TASGKS) lines the substrate pocket. Interaction with substrate tRNA regions lie at residues 43 to 46 (DSMQ) and 167 to 171 (QRILR).

It belongs to the IPP transferase family. In terms of assembly, monomer. It depends on Mg(2+) as a cofactor.

It carries out the reaction adenosine(37) in tRNA + dimethylallyl diphosphate = N(6)-dimethylallyladenosine(37) in tRNA + diphosphate. Catalyzes the transfer of a dimethylallyl group onto the adenine at position 37 in tRNAs that read codons beginning with uridine, leading to the formation of N6-(dimethylallyl)adenosine (i(6)A). In Azorhizobium caulinodans (strain ATCC 43989 / DSM 5975 / JCM 20966 / LMG 6465 / NBRC 14845 / NCIMB 13405 / ORS 571), this protein is tRNA dimethylallyltransferase.